The chain runs to 243 residues: Zinc import ATP-binding protein ZnuC (243 aa).

The region spanning 25 to 242 is the ABC transporter domain; that stretch reads LVVDSITLFY…AKFMSVFPEN (218 aa). An ATP-binding site is contributed by 57–64; that stretch reads GPNGGGKT.

This sequence belongs to the ABC transporter superfamily. Zinc importer (TC 3.A.1.15.5) family. The complex is composed of two ATP-binding proteins (ZnuC), two transmembrane proteins (ZnuB) and a solute-binding protein (ZnuA).

Its subcellular location is the cell inner membrane. The enzyme catalyses Zn(2+)(out) + ATP(in) + H2O(in) = Zn(2+)(in) + ADP(in) + phosphate(in) + H(+)(in). Part of the ABC transporter complex ZnuABC involved in zinc import. Responsible for energy coupling to the transport system. This is Zinc import ATP-binding protein ZnuC from Anaplasma phagocytophilum (strain HZ).